The chain runs to 357 residues: Isopentenyl-diphosphate delta-isomerase (357 aa).

Substrate is bound at residue 12 to 13 (RK). FMN contacts are provided by residues Ser70, 71-73 (SMT), Ser101, and Asn130. A substrate-binding site is contributed by 101 to 103 (SMR). A substrate-binding site is contributed by Gln165. Position 166 (Glu166) interacts with Mg(2+). FMN-binding positions include Lys197, 289 to 291 (GIR), and 310 to 311 (AQ).

This sequence belongs to the IPP isomerase type 2 family. As to quaternary structure, homooctamer. Dimer of tetramers. It depends on FMN as a cofactor. NADPH serves as cofactor. The cofactor is Mg(2+).

Its subcellular location is the cytoplasm. It carries out the reaction isopentenyl diphosphate = dimethylallyl diphosphate. Involved in the biosynthesis of isoprenoids. Catalyzes the 1,3-allylic rearrangement of the homoallylic substrate isopentenyl (IPP) to its allylic isomer, dimethylallyl diphosphate (DMAPP). This chain is Isopentenyl-diphosphate delta-isomerase, found in Chlorobaculum parvum (strain DSM 263 / NCIMB 8327) (Chlorobium vibrioforme subsp. thiosulfatophilum).